Consider the following 386-residue polypeptide: Mannitol-1-phosphate 5-dehydrogenase (386 aa).

Position 4-15 (4-15) interacts with NAD(+); it reads AIHFGGGNIGRG. The active site involves Lys211.

Belongs to the mannitol dehydrogenase family. As to quaternary structure, monomer.

The enzyme catalyses D-mannitol 1-phosphate + NAD(+) = beta-D-fructose 6-phosphate + NADH + H(+). Catalyzes the NAD(H)-dependent interconversion of D-fructose 6-phosphate and D-mannitol 1-phosphate in the mannitol metabolic pathway. This is Mannitol-1-phosphate 5-dehydrogenase (mpdA) from Emericella nidulans (strain FGSC A4 / ATCC 38163 / CBS 112.46 / NRRL 194 / M139) (Aspergillus nidulans).